Here is a 38-residue protein sequence, read N- to C-terminus: Large ribosomal subunit protein bL36 (38 aa).

This sequence belongs to the bacterial ribosomal protein bL36 family.

This Wigglesworthia glossinidia brevipalpis protein is Large ribosomal subunit protein bL36.